Here is a 343-residue protein sequence, read N- to C-terminus: Probable F-box protein At1g67455 (343 aa).

The region spanning 1–46 is the F-box domain; that stretch reads MMISDLPEDMVEEILSRVSIISLGALRWNDLSKARVICKAEARQQF.

This Arabidopsis thaliana (Mouse-ear cress) protein is Probable F-box protein At1g67455.